The sequence spans 230 residues: Sugar fermentation stimulation protein homolog (230 aa).

Belongs to the SfsA family.

This chain is Sugar fermentation stimulation protein homolog, found in Clostridium botulinum (strain 657 / Type Ba4).